A 305-amino-acid polypeptide reads, in one-letter code: Homoserine O-acetyltransferase (305 aa).

Catalysis depends on Cys142, which acts as the Acyl-thioester intermediate. Lys163 and Ser192 together coordinate substrate. The active-site Proton acceptor is His235. Residue Glu237 is part of the active site. Arg249 is a binding site for substrate.

Belongs to the MetA family.

It is found in the cytoplasm. The enzyme catalyses L-homoserine + acetyl-CoA = O-acetyl-L-homoserine + CoA. Its pathway is amino-acid biosynthesis; L-methionine biosynthesis via de novo pathway; O-acetyl-L-homoserine from L-homoserine: step 1/1. Functionally, transfers an acetyl group from acetyl-CoA to L-homoserine, forming acetyl-L-homoserine. This Cereibacter sphaeroides (strain KD131 / KCTC 12085) (Rhodobacter sphaeroides) protein is Homoserine O-acetyltransferase.